The chain runs to 395 residues: MTLPVNPVDNLAALIRCPSVTPAEGGALTALEKMLKLMGFSANRPVFSDDNTPDIENLYARKSGNGPHLMFAGHTDVVPPGDEKDWKHPPFAAEIEDGVMYGRGAVDMKGGIACFVAAVARHIEKHGNIKGSISFLITGDEEGPAVNGTVKLLEWAKQRGESWDASIVGEPTNPNALGDMIKIGRRGSLSGTITVHGVQGHAAYPHLAENPVRGIVTLVDSLLYPAFDEGTANFQASNLEVTTIDVGNKATNVIPNKATASFNIRFNDTWTAESLQAEIISRLERAARDNRLRQGRETPIKYELTWRERPSHVFLTHDEKLIGTLTASVEAVTGKRPELSTSGGTSDARFIKDYCPVVEFGLTGQTMHMVDERVALADLEGLTQIYERFIADFFG.

His74 is a binding site for Zn(2+). Asp76 is a catalytic residue. Asp107 provides a ligand contact to Zn(2+). The active-site Proton acceptor is Glu141. The Zn(2+) site is built by Glu142, Glu170, and His368.

The protein belongs to the peptidase M20A family. DapE subfamily. Homodimer. It depends on Zn(2+) as a cofactor. Requires Co(2+) as cofactor.

It carries out the reaction N-succinyl-(2S,6S)-2,6-diaminopimelate + H2O = (2S,6S)-2,6-diaminopimelate + succinate. It functions in the pathway amino-acid biosynthesis; L-lysine biosynthesis via DAP pathway; LL-2,6-diaminopimelate from (S)-tetrahydrodipicolinate (succinylase route): step 3/3. Its function is as follows. Catalyzes the hydrolysis of N-succinyl-L,L-diaminopimelic acid (SDAP), forming succinate and LL-2,6-diaminopimelate (DAP), an intermediate involved in the bacterial biosynthesis of lysine and meso-diaminopimelic acid, an essential component of bacterial cell walls. The chain is Succinyl-diaminopimelate desuccinylase from Brucella abortus (strain S19).